The primary structure comprises 180 residues: ATP-dependent protease subunit HslV (180 aa).

The active site involves threonine 5. Positions 161, 164, and 167 each coordinate Na(+).

The protein belongs to the peptidase T1B family. HslV subfamily. A double ring-shaped homohexamer of HslV is capped on each side by a ring-shaped HslU homohexamer. The assembly of the HslU/HslV complex is dependent on binding of ATP.

It localises to the cytoplasm. The enzyme catalyses ATP-dependent cleavage of peptide bonds with broad specificity.. Allosterically activated by HslU binding. Protease subunit of a proteasome-like degradation complex believed to be a general protein degrading machinery. The protein is ATP-dependent protease subunit HslV of Campylobacter curvus (strain 525.92).